Consider the following 638-residue polypeptide: Threonine--tRNA ligase (638 aa).

Residues 1-61 enclose the TGS domain; the sequence is MPVVTLPDGS…EADAEVALVT (61 aa). A catalytic region spans residues 242-533; the sequence is DHRKLGKALD…LTEHYAGQYP (292 aa). 3 residues coordinate Zn(2+): Cys333, His384, and His510.

This sequence belongs to the class-II aminoacyl-tRNA synthetase family. As to quaternary structure, homodimer. Zn(2+) serves as cofactor.

The protein resides in the cytoplasm. It catalyses the reaction tRNA(Thr) + L-threonine + ATP = L-threonyl-tRNA(Thr) + AMP + diphosphate + H(+). Functionally, catalyzes the attachment of threonine to tRNA(Thr) in a two-step reaction: L-threonine is first activated by ATP to form Thr-AMP and then transferred to the acceptor end of tRNA(Thr). Also edits incorrectly charged L-seryl-tRNA(Thr). The chain is Threonine--tRNA ligase from Methylococcus capsulatus (strain ATCC 33009 / NCIMB 11132 / Bath).